A 95-amino-acid chain; its full sequence is Fatty acid-binding protein, liver (95 aa).

An N6-succinyllysine mark is found at Lys13 and Lys18. Ser21 carries the phosphoserine modification. An N6-succinyllysine modification is found at Lys28. Thr33 bears the Phosphothreonine mark. Ser38 bears the Phosphoserine mark. 3 positions are modified to N6-succinyllysine: Lys39, Lys47, and Lys59. Residue Ser69 is modified to Phosphoserine. Lys90 bears the N6-succinyllysine mark.

This sequence belongs to the calycin superfamily. Fatty-acid binding protein (FABP) family. Monomer.

It is found in the cytoplasm. In terms of biological role, this protein binds free fatty acids and their coenzyme A derivatives, bilirubin, and some other small molecules in the cytoplasm; it may be involved in intracellular lipid transport. This Chaetophractus villosus (South American armadillo) protein is Fatty acid-binding protein, liver (FABP1).